The chain runs to 73 residues: Disintegrin barbourin (73 aa).

A Disintegrin domain is found at 1-73 (EAGEECDCGS…ADCPRNGLYG (73 aa)). 6 disulfide bridges follow: cysteine 6–cysteine 21, cysteine 8–cysteine 16, cysteine 15–cysteine 38, cysteine 29–cysteine 35, cysteine 34–cysteine 59, and cysteine 47–cysteine 66. The short motif at 51–53 (KGD) is the Cell attachment site; atypical (KGD) element.

The protein belongs to the venom metalloproteinase (M12B) family. P-II subfamily. P-IIa sub-subfamily. As to quaternary structure, monomer. In terms of tissue distribution, expressed by the venom gland.

The protein resides in the secreted. In terms of biological role, inhibitor of ligand binding to the integrins alpha-IIb/beta-3 (ITGA2B/ITGB3). Competition with fibrinogen for the RGD recognition sites on the alpha-IIb/beta-3 integrin results in the inhibition of platelet aggregation induced by ADP, thrombin, platelet-activating factor and collagen. The protein is Disintegrin barbourin of Sistrurus miliarius barbouri (Dusky pigmy rattlesnake).